Consider the following 429-residue polypeptide: Enolase (429 aa).

Q174 is a binding site for (2R)-2-phosphoglycerate. Residue E218 is the Proton donor of the active site. Residues D254, E295, and D321 each coordinate Mg(2+). 4 residues coordinate (2R)-2-phosphoglycerate: K346, R375, S376, and K397. Catalysis depends on K346, which acts as the Proton acceptor.

The protein belongs to the enolase family. The cofactor is Mg(2+).

Its subcellular location is the cytoplasm. It localises to the secreted. It is found in the cell surface. It catalyses the reaction (2R)-2-phosphoglycerate = phosphoenolpyruvate + H2O. Its pathway is carbohydrate degradation; glycolysis; pyruvate from D-glyceraldehyde 3-phosphate: step 4/5. Functionally, catalyzes the reversible conversion of 2-phosphoglycerate (2-PG) into phosphoenolpyruvate (PEP). It is essential for the degradation of carbohydrates via glycolysis. This chain is Enolase, found in Methanosarcina acetivorans (strain ATCC 35395 / DSM 2834 / JCM 12185 / C2A).